We begin with the raw amino-acid sequence, 504 residues long: D-alanine--D-alanyl carrier protein ligase (504 aa).

152–153 (TS) is a binding site for ATP. Asp197 lines the D-alanine pocket. ATP is bound at residue 292-297 (NTYGPT). Val301 serves as a coordination point for D-alanine. ATP-binding positions include Asp383, 394–397 (YNGR), and Lys492. A D-alanine-binding site is contributed by Lys492.

The protein belongs to the ATP-dependent AMP-binding enzyme family. DltA subfamily.

It localises to the cytoplasm. The enzyme catalyses holo-[D-alanyl-carrier protein] + D-alanine + ATP = D-alanyl-[D-alanyl-carrier protein] + AMP + diphosphate. It participates in cell wall biogenesis; lipoteichoic acid biosynthesis. Its function is as follows. Catalyzes the first step in the D-alanylation of lipoteichoic acid (LTA), the activation of D-alanine and its transfer onto the D-alanyl carrier protein (Dcp) DltC. In an ATP-dependent two-step reaction, forms a high energy D-alanyl-AMP intermediate, followed by transfer of the D-alanyl residue as a thiol ester to the phosphopantheinyl prosthetic group of the Dcp. D-alanylation of LTA plays an important role in modulating the properties of the cell wall in Gram-positive bacteria, influencing the net charge of the cell wall. This is D-alanine--D-alanyl carrier protein ligase from Bacillus thuringiensis (strain Al Hakam).